A 4080-amino-acid chain; its full sequence is Hybrid PKS-NRPS synthetase poxE (4080 aa).

In terms of domain architecture, Ketosynthase family 3 (KS3) spans 8-442 (REPIAIVGSG…GTNAHAIIEA (435 aa)). Catalysis depends on for beta-ketoacyl synthase activity residues cysteine 181, histidine 320, and histidine 362. The segment at 554 to 878 (VFTGQGAQWA…QRGMNDVEAM (325 aa)) is malonyl-CoA:ACP transacylase (MAT) domain. An N-terminal hotdog fold region spans residues 944-1078 (HPILGTRCPD…GRLVITYGPV (135 aa)). A PKS/mFAS DH domain is found at 944–1246 (HPILGTRCPD…AVPLEATNAD (303 aa)). The tract at residues 945 to 1243 (PILGTRCPDG…GIHAVPLEAT (299 aa)) is dehydratase (DH) domain. Residue histidine 976 is the Proton acceptor; for dehydratase activity of the active site. Positions 1093-1246 (MVDVPSERFY…AVPLEATNAD (154 aa)) are C-terminal hotdog fold. The active-site Proton donor; for dehydratase activity is aspartate 1152. A methyltransferase (MT) domain region spans residues 1400–1585 (HFSDYLASVV…GVDTFTSDAD (186 aa)). Positions 2118 to 2292 (TYWLVGLTGS…AGSVMNIGAI (175 aa)) are ketoreductase (KR)domain. Residues 2399 to 2478 (TTDEIYEVIK…TIGEIIKFVL (80 aa)) are peptidyl carrier protein. Residues 2405 to 2481 (EVIKECFIVK…EIIKFVLEKL (77 aa)) form the Carrier 1 domain. Serine 2441 is subject to O-(pantetheine 4'-phosphoryl)serine. Positions 2488–2569 (SLGLSPPTGA…AASPSIHTEE (82 aa)) are disordered. Residues 2511-2525 (VVVERRNVPRLEKKI) are compositionally biased toward basic and acidic residues. Residues 2528–2545 (SAGSRTSSSVTGTSKSVS) are compositionally biased toward low complexity. Polar residues predominate over residues 2551-2565 (DTASSQTSEAASPSI). The interval 2607–3036 (KEPLSFGQSR…DSKQPGGHVS (430 aa)) is condensation. The adenylation stretch occupies residues 3069–3478 (DMAKQYPQKL…DGRLRIEGRI (410 aa)). The Carrier 2 domain maps to 3593–3673 (AHLNEAQAQM…KMALLIKPQE (81 aa)). The segment at 3598–3670 (AQAQMVQLWE…TLEKMALLIK (73 aa)) is thiolation. O-(pantetheine 4'-phosphoryl)serine is present on serine 3633. Residues 3740-3959 (LTGATGFIGQ…DFVPVEQVVR (220 aa)) form a reductase (RED) domain region.

This sequence in the C-terminal section; belongs to the NRP synthetase family.

The protein operates within secondary metabolite biosynthesis. Hybrid PKS-NRPS synthetase; part of the gene cluster that mediates the biosynthesis of oxaleimides, cytotoxic compounds containing an unusual disubstituted succinimide moiety. The first step of the pathway is provided by the HR-PKS poxF that serves in a new mode of collaborative biosynthesis with the PKS-NRPS poxE, by providing the olefin containing amino acid substrate via the synthesis of an ACP-bound dec-4-enoate. The cytochrome P450 monooxygenase poxM-catalyzed oxidation at the alpha-position creates the enzyme-bound 2-hydroxydec-4-enoyl-ACP thioester, which may be prone to spontaneous hydrolysis to yield 2-hydroxydec-4-enoic acid due to increased electrophilicity of the carbonyl. 2-hydroxydec-4-enoic acid can then be further oxidized by poxM to yield the alpha-ketoacid 2-oxodec-4-enoicacid, which is reductively aminated by the aminotransferase poxL to yield (S,E)-2-aminodec-4-enoic acid. The Hybrid PKS-NRPS synthetase poxE then performs condensation between the octaketide product of its PKS modules and the amino group of (S,E)-2-aminodec-4-enoic acid which is activated and incorporated by the adenylation domain. The resulting aminoacyl product can be cyclized by the Diels-Alderase PoxQ and reductively released by the reductive (R) domain of poxE to yield an aldehyde intermediate. The released aldehyde is then substrate for a Knoevenagel condensation by the hydrolyase poxO followed by an oxidation at the 5-position of the pyrrolidone ring. The presence of the olefin from the amino acid building block allows for migration of the substituted allyl group to occur. This allylic transposition reaction takes place in a conjugate addition, semipinacol-like fashion to yield a succinimide intermediate. Iterative two-electron oxidations of the C7 methyl of the succinimide intermediate to the carboxylic acid can be catalyzed by one of two remaining cytochrome P450 monooxygenasess poxC or poxD to yield oxaleimide A. Subsequent oxidation yields the maleimide scaffold oxaleimide I. Both oxaleimide A and oxaleimide I can undergo oxidative modifications in the decalin ring to yield the series of products oxaleimides B to H. This is Hybrid PKS-NRPS synthetase poxE from Penicillium oxalicum.